The following is a 1066-amino-acid chain: Hemoglobin and hemoglobin-haptoglobin-binding protein C (1066 aa).

The signal sequence occupies residues 1–24 (MTNFKFTLLARSIAFALNASTAYA). Repeat copies occupy residues 26–29 (QPTN), 30–33 (QPTN), 34–37 (QPTN), 38–41 (QPTN), 42–45 (QPTN), 46–49 (QPTN), and 50–53 (QPTN). A 7 X 4 AA tandem repeats of Q-P-T-N region spans residues 26 to 53 (QPTNQPTNQPTNQPTNQPTNQPTNQPTN). Positions 26-54 (QPTNQPTNQPTNQPTNQPTNQPTNQPTNQ) are enriched in low complexity. The segment at 26-57 (QPTNQPTNQPTNQPTNQPTNQPTNQPTNQDSN) is disordered. A TonB box motif is present at residues 63 to 70 (EQINVSGS). One can recognise a TBDR plug domain in the interval 66 to 200 (NVSGSTETIN…LGGSVIFETK (135 aa)). A TBDR beta-barrel domain is found at 208-1066 (DKDYYVSYKR…NYRMSVQFEF (859 aa)). Positions 1049-1066 (NRLYAPGRNYRMSVQFEF) match the TonB C-terminal box motif.

The protein belongs to the TonB-dependent receptor family. Hemoglobin/haptoglobin binding protein subfamily.

Its subcellular location is the cell outer membrane. In terms of biological role, acts as a receptor for hemoglobin or the hemoglobin/haptoglobin complex of the human host and is required for heme uptake. This chain is Hemoglobin and hemoglobin-haptoglobin-binding protein C (hgpC), found in Haemophilus influenzae.